A 380-amino-acid chain; its full sequence is Cytochrome b (380 aa).

Helical transmembrane passes span 34–54 (FGSL…LLAT), 78–99 (WLIR…YLHI), 114–134 (WNTG…GYVL), and 179–199 (FFAL…IHLT). Heme b is bound by residues H84 and H98. H183 and H197 together coordinate heme b. Residue H202 participates in a ubiquinone binding. A run of 4 helical transmembrane segments spans residues 227–247 (LKDI…ALFS), 289–309 (LGGV…PLLH), 321–341 (FSQF…WVGS), and 348–368 (FIII…LLFP).

This sequence belongs to the cytochrome b family. As to quaternary structure, the cytochrome bc1 complex contains 11 subunits: 3 respiratory subunits (MT-CYB, CYC1 and UQCRFS1), 2 core proteins (UQCRC1 and UQCRC2) and 6 low-molecular weight proteins (UQCRH/QCR6, UQCRB/QCR7, UQCRQ/QCR8, UQCR10/QCR9, UQCR11/QCR10 and a cleavage product of UQCRFS1). This cytochrome bc1 complex then forms a dimer. Heme b serves as cofactor.

It localises to the mitochondrion inner membrane. Component of the ubiquinol-cytochrome c reductase complex (complex III or cytochrome b-c1 complex) that is part of the mitochondrial respiratory chain. The b-c1 complex mediates electron transfer from ubiquinol to cytochrome c. Contributes to the generation of a proton gradient across the mitochondrial membrane that is then used for ATP synthesis. The protein is Cytochrome b (MT-CYB) of Alle alle (Dovekie).